The following is a 335-amino-acid chain: Acetyl-coenzyme A carboxylase carboxyl transferase subunit alpha (335 aa).

One can recognise a CoA carboxyltransferase C-terminal domain in the interval 40 to 294; sequence QLETLATRRR…KGAIEKHLNE (255 aa).

The protein belongs to the AccA family. As to quaternary structure, acetyl-CoA carboxylase is a heterohexamer composed of biotin carboxyl carrier protein (AccB), biotin carboxylase (AccC) and two subunits each of ACCase subunit alpha (AccA) and ACCase subunit beta (AccD).

The protein resides in the cytoplasm. It carries out the reaction N(6)-carboxybiotinyl-L-lysyl-[protein] + acetyl-CoA = N(6)-biotinyl-L-lysyl-[protein] + malonyl-CoA. The protein operates within lipid metabolism; malonyl-CoA biosynthesis; malonyl-CoA from acetyl-CoA: step 1/1. Component of the acetyl coenzyme A carboxylase (ACC) complex. First, biotin carboxylase catalyzes the carboxylation of biotin on its carrier protein (BCCP) and then the CO(2) group is transferred by the carboxyltransferase to acetyl-CoA to form malonyl-CoA. This is Acetyl-coenzyme A carboxylase carboxyl transferase subunit alpha from Prochlorococcus marinus subsp. pastoris (strain CCMP1986 / NIES-2087 / MED4).